We begin with the raw amino-acid sequence, 845 residues long: ATP-binding cassette sub-family F member 1 (845 aa).

The tract at residues 1–261 is disordered; it reads MPKAPKQQPP…HLSKKEKKKL (261 aa). 2 positions are modified to phosphoserine: S22 and S24. Residues 29–39 are compositionally biased toward basic residues; sequence KKGKKDKKIKK. Basic and acidic residues predominate over residues 47–64; sequence VEDKQAGEEEKVLKEKEQ. Basic residues predominate over residues 73–85; it reads QKKKRDTRKGRRK. S105 is subject to Phosphoserine. Residue T108 is modified to Phosphothreonine. Residues S109 and S140 each carry the phosphoserine; by CK2 modification. The span at 147–160 shows a compositional bias: basic and acidic residues; the sequence is EKHPPKPAKPEKNR. Residue S166 is modified to Phosphoserine. Positions 206–226 are enriched in basic and acidic residues; sequence EIIKEKEPPKQGKEKAKKAEQ. Acidic residues predominate over residues 227 to 241; sequence GSEEEGEGEEEEEEG. S228 bears the Phosphoserine mark. Residues 304 to 548 form the ABC transporter 1 domain; that stretch reads IKLEKFSISA…MYQQKQKELL (245 aa). Residue 336–343 coordinates ATP; sequence GPNGKGKT. Positions 559-580 are enriched in basic and acidic residues; the sequence is KELKAGGKSTKQAEKQTKEALT. The interval 559–602 is disordered; the sequence is KELKAGGKSTKQAEKQTKEALTRKQQKCRRKNQDEESQEAPELL. S595 is subject to Phosphoserine. The ABC transporter 2 domain occupies 625–840; sequence LGLHGVTFGY…VLEALGEVMV (216 aa). 658–665 contributes to the ATP binding site; sequence GPNGVGKS.

Belongs to the ABC transporter superfamily. ABCF family. EF3 subfamily. Isoform 2 interacts (via N-terminus) with EIF2S1; the interaction is independent of its phosphorylated status. Isoform 2 associates (via both ABC transporter domains) with the ribosomes. Isoform 2 is phosphorylated at phosphoserine and phosphothreonine. Isoform 2 phosphorylation on Ser-109 and Ser-140 by CK2 inhibits association of EIF2 with ribosomes. In terms of tissue distribution, ubiquitous.

The protein resides in the cytoplasm. It is found in the nucleus. The protein localises to the nucleoplasm. Its subcellular location is the nucleus envelope. Functionally, isoform 2 is required for efficient Cap- and IRES-mediated mRNA translation initiation. Isoform 2 is not involved in the ribosome biogenesis. This Homo sapiens (Human) protein is ATP-binding cassette sub-family F member 1 (ABCF1).